The following is a 445-amino-acid chain: Fasciclin-like arabinogalactan protein 16 (445 aa).

Positions 1–23 are cleaved as a signal peptide; it reads MDSSYGATKFLLLLFLTTSIATA. 2 consecutive FAS1 domains span residues 35–173 and 257–400; these read NSNS…ERLL and VKDF…DGVL. Residues Asn-72 and Asn-279 are each glycosylated (N-linked (GlcNAc...) asparagine).

Belongs to the fasciclin-like AGP family.

The protein resides in the secreted. In terms of biological role, may be a cell surface adhesion protein. The polypeptide is Fasciclin-like arabinogalactan protein 16 (FLA16) (Arabidopsis thaliana (Mouse-ear cress)).